The sequence spans 456 residues: NADH oxidase (456 aa).

Asparagine 10 lines the FAD pocket. Residue histidine 11 is the Proton acceptor of the active site. Positions 12, 34, 35, 44, 81, 110, 113, 143, and 170 each coordinate FAD. Cysteine 44 acts as the Redox-active in catalysis. Cysteine 44 is subject to Cysteine sulfinic acid (-SO2H). NAD(+) is bound by residues isoleucine 171, aspartate 190, tyrosine 199, and glycine 254. Aspartate 292 contributes to the FAD binding site. Alanine 308 lines the NAD(+) pocket. FAD is bound by residues leucine 309, alanine 310, and serine 311. NAD(+) is bound at residue glycine 339. Residue phenylalanine 436 coordinates FAD.

The cofactor is FAD.

The catalysed reaction is 2 NADH + O2 + 2 H(+) = 2 NAD(+) + 2 H2O. Its function is as follows. Catalyzes the four-electron reduction of molecular oxygen to water. In Streptococcus pyogenes serotype M6 (strain ATCC BAA-946 / MGAS10394), this protein is NADH oxidase.